We begin with the raw amino-acid sequence, 180 residues long: Pituitary tumor-transforming gene 1 protein-interacting protein (180 aa).

A signal peptide spans methionine 1–alanine 32. Residues glutamine 33–glutamate 96 are Extracellular-facing. The PSI domain maps to alanine 39 to tryptophan 92. Residues asparagine 45 and asparagine 54 are each glycosylated (N-linked (GlcNAc...) asparagine). Residues alanine 97–cysteine 117 form a helical membrane-spanning segment. Topologically, residues cysteine 118 to asparagine 180 are cytoplasmic. Residues aspartate 130–tyrosine 165 adopt a coiled-coil conformation. Positions arginine 131–arginine 157 are disordered. Tyrosine 174 is subject to Phosphotyrosine.

As to quaternary structure, interacts with PTTG1. In terms of tissue distribution, ubiquitous.

The protein resides in the membrane. Its subcellular location is the cytoplasm. It is found in the nucleus. May facilitate PTTG1 nuclear translocation. The sequence is that of Pituitary tumor-transforming gene 1 protein-interacting protein (PTTG1IP) from Homo sapiens (Human).